Here is a 176-residue protein sequence, read N- to C-terminus: Crossover junction endodeoxyribonuclease RuvC (176 aa).

Active-site residues include Asp-8, Glu-69, and Asp-141. The Mg(2+) site is built by Asp-8, Glu-69, and Asp-141.

This sequence belongs to the RuvC family. Homodimer which binds Holliday junction (HJ) DNA. The HJ becomes 2-fold symmetrical on binding to RuvC with unstacked arms; it has a different conformation from HJ DNA in complex with RuvA. In the full resolvosome a probable DNA-RuvA(4)-RuvB(12)-RuvC(2) complex forms which resolves the HJ. Mg(2+) is required as a cofactor.

It is found in the cytoplasm. It catalyses the reaction Endonucleolytic cleavage at a junction such as a reciprocal single-stranded crossover between two homologous DNA duplexes (Holliday junction).. The RuvA-RuvB-RuvC complex processes Holliday junction (HJ) DNA during genetic recombination and DNA repair. Endonuclease that resolves HJ intermediates. Cleaves cruciform DNA by making single-stranded nicks across the HJ at symmetrical positions within the homologous arms, yielding a 5'-phosphate and a 3'-hydroxyl group; requires a central core of homology in the junction. The consensus cleavage sequence is 5'-(A/T)TT(C/G)-3'. Cleavage occurs on the 3'-side of the TT dinucleotide at the point of strand exchange. HJ branch migration catalyzed by RuvA-RuvB allows RuvC to scan DNA until it finds its consensus sequence, where it cleaves and resolves the cruciform DNA. The polypeptide is Crossover junction endodeoxyribonuclease RuvC (Pseudomonas syringae pv. tomato (strain ATCC BAA-871 / DC3000)).